The primary structure comprises 743 residues: Photosystem I P700 chlorophyll a apoprotein A2 (743 aa).

A run of 8 helical transmembrane segments spans residues 46–69, 135–158, 175–199, 273–291, 336–359, 375–401, 423–445, and 526–544; these read IFATHFGHVAIIFLWASSLLFHVA, LYMGAVFLLILASVFLFAGWLHLQ, LNHHLAGLFGVSSLAWAGHLIHVAI, MAHHHLAIAVIFIIAGHMY, LHFQLGIHLAALGTITSLVAQHMY, AALYTHHQYIAIFLMLGAFAHGAIFWV, AIISHLSWVSLFLGFHTLGLYVH, and FLVHHAFALALHTTVLILV. [4Fe-4S] cluster contacts are provided by Cys-568 and Cys-577. Transmembrane regions (helical) follow at residues 584 to 605 and 652 to 674; these read AFYLATFWALNTVGWVTFYWHW and LSVWAWMFLFGHLVWATGFMFLI. Chlorophyll a contacts are provided by His-663, Met-671, and Tyr-679. Residue Trp-680 coordinates phylloquinone. The helical transmembrane segment at 716–736 threads the bilayer; it reads LVGLTHFTVGYVLTYAAFLIA.

The protein belongs to the PsaA/PsaB family. In terms of assembly, the PsaA/B heterodimer binds the P700 chlorophyll special pair and subsequent electron acceptors. PSI consists of a core antenna complex that captures photons, and an electron transfer chain that converts photonic excitation into a charge separation. The cyanobacterial PSI reaction center is composed of one copy each of PsaA,B,C,D,E,F,I,J,K,L,M and X, and forms trimeric complexes. PSI electron transfer chain: 5 chlorophyll a, 1 chlorophyll a', 2 phylloquinones and 3 4Fe-4S clusters. PSI core antenna: 90 chlorophyll a, 22 carotenoids, 3 phospholipids and 1 galactolipid. P700 is a chlorophyll a/chlorophyll a' dimer, A0 is one or more chlorophyll a, A1 is one or both phylloquinones and FX is a shared 4Fe-4S iron-sulfur center. is required as a cofactor.

It localises to the cellular thylakoid membrane. The enzyme catalyses reduced [plastocyanin] + hnu + oxidized [2Fe-2S]-[ferredoxin] = oxidized [plastocyanin] + reduced [2Fe-2S]-[ferredoxin]. Its function is as follows. PsaA and PsaB bind P700, the primary electron donor of photosystem I (PSI), as well as the electron acceptors A0, A1 and FX. PSI is a plastocyanin/cytochrome c6-ferredoxin oxidoreductase, converting photonic excitation into a charge separation, which transfers an electron from the donor P700 chlorophyll pair to the spectroscopically characterized acceptors A0, A1, FX, FA and FB in turn. Oxidized P700 is reduced on the lumenal side of the thylakoid membrane by plastocyanin or cytochrome c6. This is Photosystem I P700 chlorophyll a apoprotein A2 from Mastigocladus laminosus (Fischerella sp.).